Reading from the N-terminus, the 122-residue chain is Ribosome-binding factor A (122 aa).

This sequence belongs to the RbfA family. In terms of assembly, monomer. Binds 30S ribosomal subunits, but not 50S ribosomal subunits or 70S ribosomes.

It is found in the cytoplasm. In terms of biological role, one of several proteins that assist in the late maturation steps of the functional core of the 30S ribosomal subunit. Associates with free 30S ribosomal subunits (but not with 30S subunits that are part of 70S ribosomes or polysomes). Required for efficient processing of 16S rRNA. May interact with the 5'-terminal helix region of 16S rRNA. This Syntrophomonas wolfei subsp. wolfei (strain DSM 2245B / Goettingen) protein is Ribosome-binding factor A.